We begin with the raw amino-acid sequence, 606 residues long: Glucose methanol choline oxidoreductase atC (606 aa).

Residues 1–19 (MRVFPTYIAVSGLFGGAFA) form the signal peptide. 8 N-linked (GlcNAc...) asparagine glycosylation sites follow: Asn-43, Asn-69, Asn-87, Asn-290, Asn-368, Asn-418, Asn-421, and Asn-552.

Belongs to the GMC oxidoreductase family.

The catalysed reaction is terremutin + A = terreate + AH2. It participates in secondary metabolite biosynthesis. Glucose methanol choline oxidoreductase; part of the gene cluster that mediates the biosynthesis of terreic acid, a quinone epoxide inhibitor of Bruton's tyrosine kinase. The first step of the pathway is the synthesis of 6-methylsalicylic acid (6-MSA) by the 6-methylsalicylic acid synthase atX. In the biosynthesis of 6-MSA, atX utilizes one acetyl-CoA and three malonyl-CoAs as its substrates and catalyzes a series of programmed reactions including Claisen condensation, reduction, aldol cyclization, and the hydrolytic cleavage that yields 6-MSA. The 6-methylsalicylate 1-monooxygenase atA then catalyzes the decarboxylative hydroxylation of 6-MSA to 3-methylcatechol. The next step is the conversion of 3-methylcatechol to 3-methyl-1,2,4-benzenetriol by cytochrome P450 monooxygenase atE, which is enhanced by cytochrome P450 monooxygenase atG. Then, the epoxidase atD catalyzes the epoxidation and hydroxyl oxidation of 3-methyl-1,2,4-benzenetriol to terremutin. Lastly, GMC oxidoreductase atC oxidizes terremutin to terreic acid. In Aspergillus terreus (strain NIH 2624 / FGSC A1156), this protein is Glucose methanol choline oxidoreductase atC.